Consider the following 404-residue polypeptide: Cysteine desulfurase IscS (404 aa).

Pyridoxal 5'-phosphate contacts are provided by residues 75–76 (AT), asparagine 155, glutamine 183, and 203–205 (SGH). Lysine 206 is modified (N6-(pyridoxal phosphate)lysine). Residue threonine 243 coordinates pyridoxal 5'-phosphate. The active-site Cysteine persulfide intermediate is cysteine 328. Cysteine 328 contributes to the [2Fe-2S] cluster binding site.

This sequence belongs to the class-V pyridoxal-phosphate-dependent aminotransferase family. NifS/IscS subfamily. Homodimer. Forms a heterotetramer with IscU, interacts with other sulfur acceptors. Requires pyridoxal 5'-phosphate as cofactor.

It is found in the cytoplasm. The catalysed reaction is (sulfur carrier)-H + L-cysteine = (sulfur carrier)-SH + L-alanine. It participates in cofactor biosynthesis; iron-sulfur cluster biosynthesis. Master enzyme that delivers sulfur to a number of partners involved in Fe-S cluster assembly, tRNA modification or cofactor biosynthesis. Catalyzes the removal of elemental sulfur atoms from cysteine to produce alanine. Functions as a sulfur delivery protein for Fe-S cluster synthesis onto IscU, an Fe-S scaffold assembly protein, as well as other S acceptor proteins. This is Cysteine desulfurase IscS from Klebsiella pneumoniae (strain 342).